A 1323-amino-acid chain; its full sequence is Regulatory protein ADR1 (1323 aa).

At Ser-54 the chain carries Phosphoserine. 2 consecutive C2H2-type zinc fingers follow at residues 104–126 (FVCEVCTRAFARQEHLKRHYRSH) and 132–155 (YPCGLCNRCFTRRDLLIRHAQKIH). The disordered stretch occupies residues 175 to 216 (KARKNSASSVKFQTPTYGTPDNGNFLNRTTANTRRKASPEAN). Residues 179–206 (NSASSVKFQTPTYGTPDNGNFLNRTTAN) show a composition bias toward polar residues. Residues Thr-188 and Thr-193 each carry the phosphothreonine modification. Ser-230 carries the post-translational modification Phosphoserine; by PKA; in vitro. Ser-258 is subject to Phosphoserine. At Thr-259 the chain carries Phosphothreonine. A phosphoserine mark is found at Ser-299, Ser-323, and Ser-325. Residue Thr-327 is modified to Phosphothreonine.

In terms of processing, phosphorylation at Ser-230 by cAMP-dependent protein kinase A does not affect DNA binding but appears to prevent transcription of ADH2 during glucose repression.

Its subcellular location is the nucleus. Its function is as follows. Required for transcriptional activation of glucose-repressible alcohol dehydrogenase (ADH2). This chain is Regulatory protein ADR1 (ADR1), found in Saccharomyces cerevisiae (strain ATCC 204508 / S288c) (Baker's yeast).